Here is a 939-residue protein sequence, read N- to C-terminus: Collagen-like protein 3 (939 aa).

N-linked (GlcNAc...) asparagine; by host glycosylation is found at Asn15, Asn35, Asn39, and Asn82. The segment covering 84 to 95 (SGSSGPSGPQGP) has biased composition (low complexity). Disordered regions lie at residues 84–332 (SGSS…DLGN) and 358–697 (SIKG…KGEA). Collagen-like domains lie at 88-147 (GPSG…NGDK), 148-207 (GNKG…KGDK), 211-330 (GNKG…SPDL), 364-423 (GDKG…SGAD), 427-486 (GDKG…KGEK), 493-552 (GESG…KGSK), 564-622 (GDKG…KGDV), and 638-697 (GDKG…KGEA). Composition is skewed to basic and acidic residues over residues 96–110 (KGEKGSNGDKGDKGE), 123–182 (DADK…DPGI), 189–230 (DADK…DIGL), 237–260 (DADKGDKGDKGSKGDKGDKGDIGP), 267–288 (DADKGDKGDKGSKGDKGDKGTK), 297–314 (KGDKGDKGDKGIKGDKGE), 360–371 (KGDKGDKGDTGL), 378–416 (DADKGEKGDPGNKGDKGNKGDKGSKGDKGDKGDKGDTGL), 423–491 (DADK…DVGI), 498–527 (DADKGDKGEKGDKGVNGDKGDKGSKGDTGI), 537–552 (KGDKGSKGDKGDKGSK), 560–580 (KGDKGDKGDKGSKGDKGDIGI), and 589–684 (KGDK…DKGD). 5 N-linked (GlcNAc...) asparagine; by host glycosylation sites follow: Asn788, Asn820, Asn858, Asn919, and Asn925. The interval 896–923 (NGETGAPTTDSGTNYGAGGGGGGNGTQG) is disordered. Gly residues predominate over residues 910–923 (YGAGGGGGGNGTQG).

In terms of processing, may be hydroxylated on lysine by the viral-encoded procollagen-lysine,2-oxoglutarate 5-dioxygenase.

It localises to the virion. May participate in the formation of a layer of cross-linked glycosylated fibrils at the viral surface thus giving it a hairy-like appearance. In Acanthamoeba polyphaga (Amoeba), this protein is Collagen-like protein 3.